A 204-amino-acid polypeptide reads, in one-letter code: dITP/XTP pyrophosphatase (204 aa).

8–13 (TKNAGK) serves as a coordination point for substrate. The Proton acceptor role is filled by aspartate 70. Aspartate 70 contacts Mg(2+). Substrate contacts are provided by residues serine 71, 153–156 (FGYD), lysine 176, and 181–182 (HR).

It belongs to the HAM1 NTPase family. As to quaternary structure, homodimer. It depends on Mg(2+) as a cofactor.

The catalysed reaction is XTP + H2O = XMP + diphosphate + H(+). It catalyses the reaction dITP + H2O = dIMP + diphosphate + H(+). It carries out the reaction ITP + H2O = IMP + diphosphate + H(+). In terms of biological role, pyrophosphatase that catalyzes the hydrolysis of nucleoside triphosphates to their monophosphate derivatives, with a high preference for the non-canonical purine nucleotides XTP (xanthosine triphosphate), dITP (deoxyinosine triphosphate) and ITP. Seems to function as a house-cleaning enzyme that removes non-canonical purine nucleotides from the nucleotide pool, thus preventing their incorporation into DNA/RNA and avoiding chromosomal lesions. The protein is dITP/XTP pyrophosphatase of Geobacillus kaustophilus (strain HTA426).